The primary structure comprises 213 residues: 3-isopropylmalate dehydratase small subunit (213 aa).

This sequence belongs to the LeuD family. LeuD type 1 subfamily. In terms of assembly, heterodimer of LeuC and LeuD.

The enzyme catalyses (2R,3S)-3-isopropylmalate = (2S)-2-isopropylmalate. The protein operates within amino-acid biosynthesis; L-leucine biosynthesis; L-leucine from 3-methyl-2-oxobutanoate: step 2/4. Its function is as follows. Catalyzes the isomerization between 2-isopropylmalate and 3-isopropylmalate, via the formation of 2-isopropylmaleate. In Neisseria meningitidis serogroup C (strain 053442), this protein is 3-isopropylmalate dehydratase small subunit.